The primary structure comprises 743 residues: Putative metallophosphoesterase At3g03305 (743 aa).

An N-terminal signal peptide occupies residues 1–40 (MESIGDDDELRSKTVSLPRRISFTILLLLLLISLSTRVSG). Residues Asp-66, His-68, and Asp-101 each contribute to the a divalent metal cation site. 5 consecutive transmembrane segments (helical) span residues 514–534 (ILWP…CIII), 565–585 (MPVV…FPWF), 623–643 (VMVV…LVVC), 687–704 (LFRK…WKHF), and 716–736 (MNVV…LYVI).

It belongs to the metallophosphoesterase superfamily. The cofactor is a divalent metal cation.

The protein localises to the membrane. In Arabidopsis thaliana (Mouse-ear cress), this protein is Putative metallophosphoesterase At3g03305.